Here is a 397-residue protein sequence, read N- to C-terminus: L-asparaginase-like protein GD25160 (397 aa).

The N-terminal stretch at 1–22 (MLAQSCCLRLLILLLLFTSICS) is a signal peptide. Disulfide bonds link Cys-90-Cys-95, Cys-189-Cys-205, and Cys-344-Cys-371.

This sequence belongs to the Ntn-hydrolase family.

The sequence is that of L-asparaginase-like protein GD25160 from Drosophila simulans (Fruit fly).